We begin with the raw amino-acid sequence, 169 residues long: Shikimate kinase (169 aa).

ATP is bound at residue 12 to 17 (AVGKTT). Residue T16 coordinates Mg(2+). D34, R58, and G80 together coordinate substrate. Residue R119 coordinates ATP. Position 139 (R139) interacts with substrate. R156 serves as a coordination point for ATP.

The protein belongs to the shikimate kinase family. In terms of assembly, monomer. Mg(2+) is required as a cofactor.

Its subcellular location is the cytoplasm. The catalysed reaction is shikimate + ATP = 3-phosphoshikimate + ADP + H(+). The protein operates within metabolic intermediate biosynthesis; chorismate biosynthesis; chorismate from D-erythrose 4-phosphate and phosphoenolpyruvate: step 5/7. Functionally, catalyzes the specific phosphorylation of the 3-hydroxyl group of shikimic acid using ATP as a cosubstrate. This chain is Shikimate kinase, found in Alkaliphilus oremlandii (strain OhILAs) (Clostridium oremlandii (strain OhILAs)).